A 463-amino-acid chain; its full sequence is ATP synthase subunit beta (463 aa).

152-159 (GGAGVGKT) provides a ligand contact to ATP.

It belongs to the ATPase alpha/beta chains family. As to quaternary structure, F-type ATPases have 2 components, CF(1) - the catalytic core - and CF(0) - the membrane proton channel. CF(1) has five subunits: alpha(3), beta(3), gamma(1), delta(1), epsilon(1). CF(0) has three main subunits: a(1), b(2) and c(9-12). The alpha and beta chains form an alternating ring which encloses part of the gamma chain. CF(1) is attached to CF(0) by a central stalk formed by the gamma and epsilon chains, while a peripheral stalk is formed by the delta and b chains.

It is found in the cell inner membrane. It catalyses the reaction ATP + H2O + 4 H(+)(in) = ADP + phosphate + 5 H(+)(out). Its function is as follows. Produces ATP from ADP in the presence of a proton gradient across the membrane. The catalytic sites are hosted primarily by the beta subunits. The protein is ATP synthase subunit beta of Shewanella sp. (strain MR-7).